A 333-amino-acid polypeptide reads, in one-letter code: uncharacterized protein (333 aa).

The tract at residues Pro-234–Asp-333 is disordered. The span at Val-251–Glu-265 shows a compositional bias: pro residues. A compositionally biased stretch (polar residues) spans Gly-324 to Asp-333.

It localises to the cell projection. The protein localises to the cilium. Its subcellular location is the flagellum. This is an uncharacterized protein from Homo sapiens (Human).